The primary structure comprises 548 residues: Probable manganese-dependent inorganic pyrophosphatase (548 aa).

Residues 1-74 form a PPase part 1 region; that stretch reads MKALERVYVI…HIETLEPTVE (74 aa). 3 residues coordinate Mn(2+): His12, Asp16, and Asp18. CBS domains follow at residues 77–132 and 254–311; these read ELKN…RLKI and MSKK…VILV. The PPase part 2 stretch occupies residues 306–548; that stretch reads KKVILVDHNE…KIGEVLRRER (243 aa). Mn(2+) contacts are provided by Asp312, His334, and Asp386.

The protein belongs to the PPase class C family. Mn(2+) serves as cofactor.

Its subcellular location is the cytoplasm. It carries out the reaction diphosphate + H2O = 2 phosphate + H(+). The polypeptide is Probable manganese-dependent inorganic pyrophosphatase (ppaC) (Thermotoga maritima (strain ATCC 43589 / DSM 3109 / JCM 10099 / NBRC 100826 / MSB8)).